The sequence spans 206 residues: Uracil phosphoribosyltransferase (206 aa).

5-phospho-alpha-D-ribose 1-diphosphate contacts are provided by residues Arg76, Arg101, and 128–136; that span reads DPMLATGGS. Uracil is bound by residues Ile191 and 196-198; that span reads GDA. Asp197 is a 5-phospho-alpha-D-ribose 1-diphosphate binding site.

It belongs to the UPRTase family. The cofactor is Mg(2+).

The enzyme catalyses UMP + diphosphate = 5-phospho-alpha-D-ribose 1-diphosphate + uracil. Its pathway is pyrimidine metabolism; UMP biosynthesis via salvage pathway; UMP from uracil: step 1/1. Allosterically activated by GTP. Its function is as follows. Catalyzes the conversion of uracil and 5-phospho-alpha-D-ribose 1-diphosphate (PRPP) to UMP and diphosphate. This Malacoplasma penetrans (strain HF-2) (Mycoplasma penetrans) protein is Uracil phosphoribosyltransferase.